The following is a 267-amino-acid chain: Exodeoxyribonuclease III (267 aa).

Glu-34 serves as a coordination point for Mg(2+). Tyr-109 is a catalytic residue. Positions 151, 153, and 258 each coordinate Mg(2+). Asp-151 acts as the Proton donor/acceptor in catalysis.

This sequence belongs to the DNA repair enzymes AP/ExoA family. As to quaternary structure, monomer. Requires Mg(2+) as cofactor. The cofactor is Mn(2+).

It carries out the reaction Exonucleolytic cleavage in the 3'- to 5'-direction to yield nucleoside 5'-phosphates.. Major apurinic-apyrimidinic endonuclease of E.coli. It removes the damaged DNA at cytosines and guanines by cleaving on the 3'-side of the AP site by a beta-elimination reaction. This chain is Exodeoxyribonuclease III (xthA), found in Haemophilus influenzae (strain ATCC 51907 / DSM 11121 / KW20 / Rd).